The primary structure comprises 342 residues: Ribosomal RNA small subunit methyltransferase C (342 aa).

It belongs to the methyltransferase superfamily. RsmC family. Monomer.

The protein resides in the cytoplasm. It catalyses the reaction guanosine(1207) in 16S rRNA + S-adenosyl-L-methionine = N(2)-methylguanosine(1207) in 16S rRNA + S-adenosyl-L-homocysteine + H(+). Its function is as follows. Specifically methylates the guanine in position 1207 of 16S rRNA in the 30S particle. In Erwinia tasmaniensis (strain DSM 17950 / CFBP 7177 / CIP 109463 / NCPPB 4357 / Et1/99), this protein is Ribosomal RNA small subunit methyltransferase C.